The sequence spans 229 residues: 2,3-bisphosphoglycerate-dependent phosphoglycerate mutase (229 aa).

Substrate contacts are provided by residues 7 to 14 (RHGQSEWN), 20 to 21 (TG), Arg-59, 86 to 89 (ERHY), Lys-97, 113 to 114 (RR), and 182 to 183 (GN). Catalysis depends on His-8, which acts as the Tele-phosphohistidine intermediate. Glu-86 functions as the Proton donor/acceptor in the catalytic mechanism.

The protein belongs to the phosphoglycerate mutase family. BPG-dependent PGAM subfamily.

It carries out the reaction (2R)-2-phosphoglycerate = (2R)-3-phosphoglycerate. Its pathway is carbohydrate degradation; glycolysis; pyruvate from D-glyceraldehyde 3-phosphate: step 3/5. In terms of biological role, catalyzes the interconversion of 2-phosphoglycerate and 3-phosphoglycerate. The polypeptide is 2,3-bisphosphoglycerate-dependent phosphoglycerate mutase (Listeria monocytogenes serovar 1/2a (strain ATCC BAA-679 / EGD-e)).